A 267-amino-acid chain; its full sequence is Tryptophan synthase alpha chain (267 aa).

Catalysis depends on proton acceptor residues glutamate 49 and aspartate 60.

The protein belongs to the TrpA family. Tetramer of two alpha and two beta chains.

The enzyme catalyses (1S,2R)-1-C-(indol-3-yl)glycerol 3-phosphate + L-serine = D-glyceraldehyde 3-phosphate + L-tryptophan + H2O. It functions in the pathway amino-acid biosynthesis; L-tryptophan biosynthesis; L-tryptophan from chorismate: step 5/5. The alpha subunit is responsible for the aldol cleavage of indoleglycerol phosphate to indole and glyceraldehyde 3-phosphate. The protein is Tryptophan synthase alpha chain of Cyanothece sp. (strain PCC 7425 / ATCC 29141).